Consider the following 569-residue polypeptide: 3-(3-hydroxy-phenyl)propionate/3-hydroxycinnamic acid hydroxylase (569 aa).

FAD-binding positions include 8 to 37 and 273 to 283; these read DVVIVGAGPAGLTLANILGLEGVRVLVVDE and FREGRLMLAGD.

It belongs to the PheA/TfdB FAD monooxygenase family. It depends on FAD as a cofactor.

The catalysed reaction is 3-(3-hydroxyphenyl)propanoate + NADH + O2 + H(+) = 3-(2,3-dihydroxyphenyl)propanoate + NAD(+) + H2O. It carries out the reaction (2E)-3-(3-hydroxyphenyl)prop-2-enoate + NADH + O2 + H(+) = (2E)-3-(2,3-dihydroxyphenyl)prop-2-enoate + NAD(+) + H2O. It functions in the pathway aromatic compound metabolism; 3-phenylpropanoate degradation. Its function is as follows. Catalyzes the insertion of one atom of molecular oxygen into position 2 of the phenyl ring of 3-(3-hydroxyphenyl)propionate (3-HPP) and hydroxycinnamic acid (3HCI). The sequence is that of 3-(3-hydroxy-phenyl)propionate/3-hydroxycinnamic acid hydroxylase from Mycolicibacterium gilvum (strain PYR-GCK) (Mycobacterium gilvum (strain PYR-GCK)).